The sequence spans 65 residues: Small hydrophobic protein (65 aa).

The Intravirion portion of the chain corresponds to 1-20 (MGNTSITIEFTSKFWPYFTL). An interaction with host BCAP31 region spans residues 6–15 (ITIEFTSKFW). Residues 21–44 (IHMILTLISLLIIITIMIAILNKL) form a helical; Signal-anchor for type II membrane protein membrane-spanning segment. The tract at residues 38–43 (IAILNK) is interaction with small-molecule inhibitor. The Virion surface portion of the chain corresponds to 45–65 (SEHKTFCNNTLELGQMHQINT). N-linked (GlcNAc...) asparagine; by host glycosylation occurs at Asn-52.

This sequence belongs to the orthopneumovirus small hydrophobic protein family. As to quaternary structure, homopentamer forming a funnel-like pore. Interacts with glycoprotein G; this interaction occurs on the surface of virion particles and infected cells. Interacts with host BCAP31 (via C-terminus); this interaction is direct. Four species of SH have been detected in infected cell cytoplasm: a 7.5 kDa non-glycosylated form (SH0), a 13-15 kDa form that contains one or two N-linked carbohydrate side chains of the high-mannose type (SHg), a 21-30 kDa polylactosaminoglycan-modified form of the protein (SHp), and the isoform generated by alternative translational initiation. Of these different forms, SH0 is by far the most abundant protein detected during virus infection. Post-translationally, tyrosine phosphorylated.

Its subcellular location is the virion membrane. The protein resides in the host cell membrane. It localises to the host Golgi apparatus membrane. It is found in the host endoplasmic reticulum membrane. With respect to regulation, channel activity is inhibited by copper. Also inhibited by small-molecule pyronin B. Its function is as follows. Viroporin that forms a homopentameric ion channel displaying low ion selectivity. May play a role in virus morphogenesis and pathogenicity at various stages of the viral life cycle. Accumulates at the membrane of the Golgi apparatus in infected cells and may facilitate virus release by modifying the secretory pathway. May enhance host membrane permeability and disrupt cellular ion homeostasis, which can be sensed as damage-associated molecular patterns/danger signals, triggering NLRP3 inflammasome activation and inflammatory immune response. Also inhibits host TNFA-mediated signaling pathway and may delay apoptosis, allowing time for the virus to replicate. The sequence is that of Small hydrophobic protein from Homo sapiens (Human).